Reading from the N-terminus, the 225-residue chain is UPF0173 metal-dependent hydrolase PF1764 (225 aa).

This sequence belongs to the UPF0173 family.

This is UPF0173 metal-dependent hydrolase PF1764 from Pyrococcus furiosus (strain ATCC 43587 / DSM 3638 / JCM 8422 / Vc1).